The following is a 210-amino-acid chain: Urease accessory protein UreF (210 aa).

Belongs to the UreF family. In terms of assembly, ureD, UreF and UreG form a complex that acts as a GTP-hydrolysis-dependent molecular chaperone, activating the urease apoprotein by helping to assemble the nickel containing metallocenter of UreC. The UreE protein probably delivers the nickel.

Its subcellular location is the cytoplasm. Its function is as follows. Required for maturation of urease via the functional incorporation of the urease nickel metallocenter. In Cereibacter sphaeroides (strain ATCC 17023 / DSM 158 / JCM 6121 / CCUG 31486 / LMG 2827 / NBRC 12203 / NCIMB 8253 / ATH 2.4.1.) (Rhodobacter sphaeroides), this protein is Urease accessory protein UreF.